The following is a 222-amino-acid chain: Small ribosomal subunit protein uS3 (222 aa).

The KH type-2 domain occupies 39–108 (IRKFIKKELF…NVLINIVEVK (70 aa)).

This sequence belongs to the universal ribosomal protein uS3 family. In terms of assembly, part of the 30S ribosomal subunit. Forms a tight complex with proteins S10 and S14.

Its function is as follows. Binds the lower part of the 30S subunit head. Binds mRNA in the 70S ribosome, positioning it for translation. This chain is Small ribosomal subunit protein uS3, found in Clostridium perfringens (strain ATCC 13124 / DSM 756 / JCM 1290 / NCIMB 6125 / NCTC 8237 / Type A).